We begin with the raw amino-acid sequence, 419 residues long: UDP-N-acetylglucosamine 1-carboxyvinyltransferase (419 aa).

Lys22 to Asn23 is a phosphoenolpyruvate binding site. Arg93 lines the UDP-N-acetyl-alpha-D-glucosamine pocket. Cys117 acts as the Proton donor in catalysis. Cys117 is subject to 2-(S-cysteinyl)pyruvic acid O-phosphothioketal. Asp307 and Ile329 together coordinate UDP-N-acetyl-alpha-D-glucosamine.

It belongs to the EPSP synthase family. MurA subfamily.

Its subcellular location is the cytoplasm. The enzyme catalyses phosphoenolpyruvate + UDP-N-acetyl-alpha-D-glucosamine = UDP-N-acetyl-3-O-(1-carboxyvinyl)-alpha-D-glucosamine + phosphate. It functions in the pathway cell wall biogenesis; peptidoglycan biosynthesis. Its function is as follows. Cell wall formation. Adds enolpyruvyl to UDP-N-acetylglucosamine. This chain is UDP-N-acetylglucosamine 1-carboxyvinyltransferase, found in Shewanella frigidimarina (strain NCIMB 400).